We begin with the raw amino-acid sequence, 137 residues long: Large ribosomal subunit protein uL16 (137 aa).

This sequence belongs to the universal ribosomal protein uL16 family. As to quaternary structure, part of the 50S ribosomal subunit.

Binds 23S rRNA and is also seen to make contacts with the A and possibly P site tRNAs. This chain is Large ribosomal subunit protein uL16, found in Rhodopseudomonas palustris (strain BisB18).